We begin with the raw amino-acid sequence, 775 residues long: Major facilitator superfamily domain-containing protein 6 (775 aa).

At Thr-11 the chain carries Phosphothreonine. The segment at 28-47 (NGICREPEPPSNETPSSTET) is disordered. Positions 38-47 (SNETPSSTET) are enriched in low complexity. 12 helical membrane passes run 74–94 (VFYF…PVYY), 106–126 (LLVG…GVVA), 133–153 (KIVL…IGFV), 289–309 (AIFL…ASSV), 338–358 (WGLA…DVLI), 372–392 (QIVF…ATQF), 453–473 (VLFV…FLYW), 482–502 (TTLF…AYFF), 510–530 (IGHI…YIYI), 547–567 (GVTH…AVPP), 582–602 (LGLG…YFGA), and 608–628 (GIGM…WLAV).

It belongs to the major facilitator superfamily. MFSD6 family.

It is found in the membrane. MHC class I receptor. Binds only to H-2 class I histocompatibility antigen, K-D alpha chain (H-2K(D)). In Mus musculus (Mouse), this protein is Major facilitator superfamily domain-containing protein 6 (Mfsd6).